A 318-amino-acid chain; its full sequence is Aspartate carbamoyltransferase catalytic subunit (318 aa).

Carbamoyl phosphate-binding residues include Arg-58 and Thr-59. Residue Lys-86 participates in L-aspartate binding. The carbamoyl phosphate site is built by Arg-108, His-141, and Gln-144. L-aspartate is bound by residues Arg-174 and Arg-226. Gly-270 and Pro-271 together coordinate carbamoyl phosphate.

The protein belongs to the aspartate/ornithine carbamoyltransferase superfamily. ATCase family. As to quaternary structure, heterododecamer (2C3:3R2) of six catalytic PyrB chains organized as two trimers (C3), and six regulatory PyrI chains organized as three dimers (R2).

It carries out the reaction carbamoyl phosphate + L-aspartate = N-carbamoyl-L-aspartate + phosphate + H(+). It participates in pyrimidine metabolism; UMP biosynthesis via de novo pathway; (S)-dihydroorotate from bicarbonate: step 2/3. Functionally, catalyzes the condensation of carbamoyl phosphate and aspartate to form carbamoyl aspartate and inorganic phosphate, the committed step in the de novo pyrimidine nucleotide biosynthesis pathway. In Lactobacillus delbrueckii subsp. bulgaricus (strain ATCC 11842 / DSM 20081 / BCRC 10696 / JCM 1002 / NBRC 13953 / NCIMB 11778 / NCTC 12712 / WDCM 00102 / Lb 14), this protein is Aspartate carbamoyltransferase catalytic subunit.